The following is a 73-amino-acid chain: Beta-defensin 50 (73 aa).

Residues 1-23 form the signal peptide; that stretch reads MKTLHLLLLISGLLSVFVKGVGS. Disulfide bonds link cysteine 34-cysteine 63 and cysteine 46-cysteine 64.

It belongs to the beta-defensin family.

It localises to the secreted. Functionally, has bactericidal activity. The protein is Beta-defensin 50 (Defb50) of Rattus norvegicus (Rat).